The sequence spans 295 residues: sn-glycerol-3-phosphate transport system permease protein UgpA (295 aa).

The Cytoplasmic segment spans residues 1-11 (MSSSRPVFRSR). Residues 12–32 (WLPYLLVAPQLIITVIFFIWP) form a helical membrane-spanning segment. At 33–80 (AGEALWYSLQSVDPFGFSSQFVGLDNFVALFHDSYYIDSFWTTIKFST) the chain is on the periplasmic side. The ABC transmembrane type-1 domain occupies 76-284 (IKFSTFVTVS…FLVIVLTVVQ (209 aa)). Residues 81–101 (FVTVSGLLVSLFFAALVEYIV) form a helical membrane-spanning segment. The Cytoplasmic segment spans residues 102-109 (RGSRFYQT). Residues 110-130 (LMLLPYAVAPAVAAVLWIFLF) traverse the membrane as a helical segment. Over 131–156 (NPGRGLITHFLAEFGYDWNHAQNSGQ) the chain is Periplasmic. Residues 157–177 (AMFLVVFASVWKQISYNFLFF) form a helical membrane-spanning segment. Residues 178–207 (YAALQSIPRSLIEAAAIDGVGPIRRFFKIA) are Cytoplasmic-facing. A helical transmembrane segment spans residues 208 to 228 (LPLIAPVSFFLLVVNLVYAFF). At 229 to 262 (DTFPVIDAATSGGPVQAITTLIYKIYREGFTGLD) the chain is on the periplasmic side. Residues 263–283 (LASSAAQSVVLMFLVIVLTVV) form a helical membrane-spanning segment. Over 284-295 (QFRYVESKVRYQ) the chain is Cytoplasmic.

It belongs to the binding-protein-dependent transport system permease family. UgpAE subfamily. As to quaternary structure, the complex is composed of two ATP-binding proteins (UgpC), two transmembrane proteins (UgpA and UgpE) and a solute-binding protein (UgpB).

The protein resides in the cell inner membrane. Functionally, part of the ABC transporter complex UgpBAEC involved in sn-glycerol-3-phosphate (G3P) import. Probably responsible for the translocation of the substrate across the membrane. In Shigella dysenteriae serotype 1 (strain Sd197), this protein is sn-glycerol-3-phosphate transport system permease protein UgpA (ugpA).